We begin with the raw amino-acid sequence, 601 residues long: ATP-dependent rRNA helicase SPB4 (601 aa).

Positions 14–42 match the Q motif motif; sequence LAWSQASLQPWIHDAIDSLGFRSMTPVQA. The 184-residue stretch at 45–228 folds into the Helicase ATP-binding domain; that stretch reads IPLFCGNKDV…RTGMSNPVKI (184 aa). 58 to 65 is a binding site for ATP; it reads AVTGSGKT. A DEAD box motif is present at residues 176–179; it reads DEAD. The Helicase C-terminal domain maps to 257–419; it reads VLINMLSTLQ…AYKAFSKNLR (163 aa). A coiled-coil region spans residues 507-575; that stretch reads KEKIRLETME…QIMNESSDEE (69 aa). Residues 532–554 show a composition bias toward basic and acidic residues; the sequence is LKVKNEAWSSKNEKKEGKQERRE. Positions 532–576 are disordered; sequence LKVKNEAWSSKNEKKEGKQERREKMKRKREAIEKQIMNESSDEET.

It belongs to the DEAD box helicase family. DDX55/SPB4 subfamily. Component of pre-60S ribosomal complexes.

It localises to the nucleus. The protein localises to the nucleolus. The catalysed reaction is ATP + H2O = ADP + phosphate + H(+). ATP-binding RNA helicase involved in the biogenesis of 60S ribosomal subunits. Binds 90S pre-ribosomal particles and dissociates from pre-60S ribosomal particles after processing of 27SB pre-rRNA. Required for the normal formation of 18S rRNA through the processing of pre-rRNAs at sites A0, A1 and A2, and the normal formation of 25S and 5.8S rRNAs through the processing of pre-rRNAs at sites C1 and C2. The chain is ATP-dependent rRNA helicase SPB4 from Meyerozyma guilliermondii (strain ATCC 6260 / CBS 566 / DSM 6381 / JCM 1539 / NBRC 10279 / NRRL Y-324) (Yeast).